Reading from the N-terminus, the 395-residue chain is Inner membrane protein YjgN (395 aa).

Residues 1–24 lie on the Cytoplasmic side of the membrane; the sequence is MNNVISSKDNHNHTLVFTGKGGKY. Residues 25-45 traverse the membrane as a helical segment; that stretch reads FVICLVNFLLTCITLGIYAPW. Topologically, residues 46 to 71 are periplasmic; sequence AMVKCRRYIYTNMTLNNQPFAYKATG. A helical membrane pass occupies residues 72–92; it reads GALFISVLLVFIIYIVSLSLI. At 93–95 the chain is on the cytoplasmic side; the sequence is EHG. A helical transmembrane segment spans residues 96-116; sequence HPGLGFTLFGLLIAIIPFMAV. The Periplasmic segment spans residues 117 to 146; it reads KGLQYQAMMTSLNGVHFGFQCSMRRAWWYM. A helical membrane pass occupies residues 147–167; the sequence is FALPVLLMVALYIVLYIISLV. Position 168 (Thr168) is a topological domain, cytoplasmic. Residues 169–189 form a helical membrane-spanning segment; the sequence is IAVGGLVFSIVFLGLLAIIGI. The Periplasmic portion of the chain corresponds to 190 to 229; sequence GVINGITYSKWMTLFGNGANFGIHRFSIQVNVKTCIRGCV. The chain crosses the membrane as a helical span at residues 230–250; it reads LAMLTLFPFAVVIGYLIAPVF. Topologically, residues 251 to 275 are cytoplasmic; it reads TDMILLSMMGNAQAGGALILQYYGQ. The chain crosses the membrane as a helical span at residues 276–296; sequence IMACYFLYFLAIIVVTSYLYV. Over 297–327 the chain is Periplasmic; sequence ALRNLFLNNLSLANDSIRFHSSVTAHGMLWR. A helical transmembrane segment spans residues 328 to 348; that stretch reads LLVVFVISGVTLGLAYPWLKI. Topologically, residues 349 to 395 are cytoplasmic; it reads WLVSWLAQNTQVQGDLDSLELTNDEKPLENSPLMWISRGIMPYFPFI.

Its subcellular location is the cell inner membrane. The sequence is that of Inner membrane protein YjgN (yjgN) from Salmonella typhimurium (strain LT2 / SGSC1412 / ATCC 700720).